A 1580-amino-acid polypeptide reads, in one-letter code: Dynamin-binding protein (1580 aa).

Position 1 is an N-acetylmethionine (Met1). 3 consecutive SH3 domains span residues 2-61 (EPGS…IVTI), 66-127 (EGER…ELCL), and 146-205 (YSLG…LLGP). 4 disordered regions span residues 211 to 245 (ESVNSRSGDDSAVNGEVDVPPEEAESGGDEDDQQS), 304 to 446 (NRTE…LVPL), 500 to 546 (YAQK…DSLD), and 589 to 688 (RGSS…AQTF). Positions 229 to 243 (VPPEEAESGGDEDDQ) are enriched in acidic residues. In terms of domain architecture, SH3 4 spans 244-303 (QSGTYGIALYRFQALETNELDFEVGDRIQILGTLEDGWLEGCLKGKTGVFPHRFVKLCPS). Composition is skewed to polar residues over residues 422-439 (QKSQHYLTAGGSHQTSDP) and 502-513 (QKHQTSTENTAS). The span at 516–527 (DPPERPERRPGL) shows a compositional bias: basic and acidic residues. Positions 608–617 (RPPPPRPRTP) are enriched in pro residues. Positions 671–682 (APEKEDSEHMEK) are enriched in basic and acidic residues. A Phosphoserine modification is found at Ser683. The stretch at 694–755 (LARIRDVEQD…LELQQLRDMT (62 aa)) forms a coiled coil. The DH domain occupies 783 to 970 (KRAKVVAELL…KEINVNINEY (188 aa)). The region spanning 1011-1220 (LKHLTGFAPQ…LKATDREGNL (210 aa)) is the BAR domain. Residues 1288 to 1351 (PPEKLFHVQR…YSSFLKPYNP (64 aa)) form the SH3 5 domain. Over residues 1356-1365 (SDASVASHSS) the composition is skewed to low complexity. Disordered regions lie at residues 1356–1384 (SDASVASHSSTESEHSGSSPGCHRQNSHS) and 1426–1514 (TGHP…GSSE). The segment covering 1426–1440 (TGHPETGPSTCSSDP) has biased composition (polar residues). Residues 1516-1579 (EGNQVYFAIY…PSNYIRKTEY (64 aa)) enclose the SH3 6 domain.

As to quaternary structure, binds DNM1 via its N-terminal SH3 domains. The C-terminal SH3 domain binds a complex containing actin, tubulin, Hsp70 and actin-regulatory proteins, such as ENAH, EVL, WIRE, CR16, WAVE1 and NAP1L1. Interacts with FASLG. Interacts (via SH3 domain 6) with WASL. Interacts (via SH3 domain 6) interacts with ENAH. Interacts (via C-terminal domain) with TJP1; required for the apical cell-cell junction localization of DNMBP.

It localises to the cytoplasm. The protein resides in the golgi apparatus. It is found in the golgi stack. Its subcellular location is the cytoskeleton. The protein localises to the synapse. It localises to the cell junction. Its function is as follows. Plays a critical role as a guanine nucleotide exchange factor (GEF) for CDC42 in several intracellular processes associated with the actin and microtubule cytoskeleton. Regulates the structure of apical junctions in epithelial cells. Participates in the normal lumenogenesis of epithelial cell cysts by regulating spindle orientation. Plays a role in ciliogenesis. May play a role in membrane trafficking between the cell surface and the Golgi. This is Dynamin-binding protein from Mus musculus (Mouse).